A 175-amino-acid polypeptide reads, in one-letter code: Isopentenyl-diphosphate Delta-isomerase (175 aa).

Mn(2+) contacts are provided by His-22 and His-29. The Nudix hydrolase domain occupies 27–160 (KLHRAFSVLL…PAAYTPWLAE (134 aa)). Cys-64 is a catalytic residue. Cys-64 contributes to the Mg(2+) binding site. Mn(2+) is bound at residue His-66. Glu-84 lines the Mg(2+) pocket. Glu-110 and Glu-112 together coordinate Mn(2+). Glu-112 is a catalytic residue.

The protein belongs to the IPP isomerase type 1 family. The cofactor is Mg(2+). It depends on Mn(2+) as a cofactor.

It is found in the cytoplasm. The catalysed reaction is isopentenyl diphosphate = dimethylallyl diphosphate. It functions in the pathway isoprenoid biosynthesis; dimethylallyl diphosphate biosynthesis; dimethylallyl diphosphate from isopentenyl diphosphate: step 1/1. Functionally, catalyzes the 1,3-allylic rearrangement of the homoallylic substrate isopentenyl (IPP) to its highly electrophilic allylic isomer, dimethylallyl diphosphate (DMAPP). The protein is Isopentenyl-diphosphate Delta-isomerase of Nocardia farcinica (strain IFM 10152).